We begin with the raw amino-acid sequence, 100 residues long: Large ribosomal subunit protein bL21 (100 aa).

Belongs to the bacterial ribosomal protein bL21 family. As to quaternary structure, part of the 50S ribosomal subunit. Contacts protein L20.

In terms of biological role, this protein binds to 23S rRNA in the presence of protein L20. This Paramagnetospirillum magneticum (strain ATCC 700264 / AMB-1) (Magnetospirillum magneticum) protein is Large ribosomal subunit protein bL21.